The following is a 449-amino-acid chain: MRECISIHVGQAGVQIGNACWELYCLEHGIQPDGQMPSDKTIGGGDDSFNTFFSETGAGKHVPRAVFVDLEPTVIDEVRTGTYRQLFHPEQLITGKEDAANNYARGHYTIGKEIIDLVLDRIRKLADQCTGLQGFLVFHSFGGGTGSGFTSLLMERLSVDYGKKSKLEFSIYPAPQVSTAVVEPYNSILTTHTTLEHSDCAFMVDNEAIYDICRRNLDIERPTYTNLNRLISQIVSSITASLRFDGALNVDLTEFQTNLVPYPRIHFPLATYAPVISAEKAYHEQLTVAEITNACFEPANQMVKCDPRHGKYMACCLLYRGDVVPKDVNAAIATIKTKRTIQFVDWCPTGFKVGINYQPPTVVPGGDLAKVQRAVCMLSNTTAIAEAWARLDHKFDLMYAKRAFVHWYVGEGMEEGEFSEAREDMAALEKDYEEVGADSAEGDDEGEEY.

The short motif at 1–4 (MREC) is the MREC motif element. Gln-11 lines the GTP pocket. Lys-40 is subject to N6-acetyllysine. GTP-binding residues include Glu-71, Ser-140, Gly-144, Thr-145, Thr-179, Asn-206, and Asn-228. Position 71 (Glu-71) interacts with Mg(2+). The active site involves Glu-254. 3'-nitrotyrosine is present on Tyr-282. Phosphotyrosine is present on Tyr-432. A Phosphoserine modification is found at Ser-439. Position 449 is a 3'-nitrotyrosine (Tyr-449).

Belongs to the tubulin family. In terms of assembly, dimer of alpha and beta chains. A typical microtubule is a hollow water-filled tube with an outer diameter of 25 nm and an inner diameter of 15 nM. Alpha-beta heterodimers associate head-to-tail to form protofilaments running lengthwise along the microtubule wall with the beta-tubulin subunit facing the microtubule plus end conferring a structural polarity. Microtubules usually have 13 protofilaments but different protofilament numbers can be found in some organisms and specialized cells. Mg(2+) is required as a cofactor. Post-translationally, some glutamate residues at the C-terminus are polyglycylated, resulting in polyglycine chains on the gamma-carboxyl group. Glycylation is mainly limited to tubulin incorporated into axonemes (cilia and flagella) whereas glutamylation is prevalent in neuronal cells, centrioles, axonemes, and the mitotic spindle. Both modifications can coexist on the same protein on adjacent residues, and lowering polyglycylation levels increases polyglutamylation, and reciprocally. Cilia and flagella glycylation is required for their stability and maintenance. Flagella glycylation controls sperm motility. Some glutamate residues at the C-terminus are polyglutamylated, resulting in polyglutamate chains on the gamma-carboxyl group. Polyglutamylation plays a key role in microtubule severing by spastin (SPAST). SPAST preferentially recognizes and acts on microtubules decorated with short polyglutamate tails: severing activity by SPAST increases as the number of glutamates per tubulin rises from one to eight, but decreases beyond this glutamylation threshold. Glutamylation is also involved in cilia motility. In terms of processing, acetylation of alpha chains at Lys-40 is located inside the microtubule lumen. This modification has been correlated with increased microtubule stability, intracellular transport and ciliary assembly. Post-translationally, methylation of alpha chains at Lys-40 is found in mitotic microtubules and is required for normal mitosis and cytokinesis contributing to genomic stability. Nitration of Tyr-449 is irreversible and interferes with normal dynein intracellular distribution. In terms of processing, undergoes a tyrosination/detyrosination cycle, the cyclic removal and re-addition of a C-terminal tyrosine residue by the enzymes tubulin tyrosine carboxypeptidase (MATCAP1, VASH1 or VASH2) and tubulin tyrosine ligase (TTL), respectively. Post-translationally, tyrosination promotes microtubule interaction with CAP-Gly domain-containing proteins such as CLIP1, CLIP2 and DCTN1. Tyrosination regulates the initiation of dynein-dynactin motility via interaction with DCTN1, which brings the dynein-dynactin complex into contact with microtubules. In neurons, tyrosinated tubulins mediate the initiation of retrograde vesicle transport. Detyrosination is involved in metaphase plate congression by guiding chromosomes during mitosis: detyrosination promotes interaction with CENPE, promoting pole-proximal transport of chromosomes toward the equator. Detyrosination increases microtubules-dependent mechanotransduction in dystrophic cardiac and skeletal muscle. In cardiomyocytes, detyrosinated microtubules are required to resist to contractile compression during contraction: detyrosination promotes association with desmin (DES) at force-generating sarcomeres, leading to buckled microtubules and mechanical resistance to contraction. Minor alpha-tubulin expressed in all tissues.

It is found in the cytoplasm. It localises to the cytoskeleton. The catalysed reaction is GTP + H2O = GDP + phosphate + H(+). In terms of biological role, tubulin is the major constituent of microtubules, a cylinder consisting of laterally associated linear protofilaments composed of alpha- and beta-tubulin heterodimers. Microtubules grow by the addition of GTP-tubulin dimers to the microtubule end, where a stabilizing cap forms. Below the cap, tubulin dimers are in GDP-bound state, owing to GTPase activity of alpha-tubulin. The sequence is that of Tubulin alpha-1C chain (Tuba1c) from Mus musculus (Mouse).